Reading from the N-terminus, the 144-residue chain is L-fucose mutarotase (144 aa).

The active-site Proton donor is H22. Substrate is bound by residues D30, R109, and 131-133; that span reads YGN.

It belongs to the RbsD / FucU family. FucU mutarotase subfamily. In terms of assembly, homodecamer.

The protein localises to the cytoplasm. It catalyses the reaction alpha-L-fucose = beta-L-fucose. Its pathway is carbohydrate metabolism; L-fucose metabolism. Its function is as follows. Involved in the anomeric conversion of L-fucose. The chain is L-fucose mutarotase from Haemophilus influenzae (strain PittGG).